Consider the following 913-residue polypeptide: Protein SEY1 homolog (913 aa).

At 1 to 825 (MANASKTQII…ETGGQMSLKN (825 aa)) the chain is on the cytoplasmic side. The GB1/RHD3-type G domain occupies 33–288 (GFNYNVIAIL…IPADGFAQYC (256 aa)). 43–50 (GSQSSGKS) serves as a coordination point for GTP. Disordered stretches follow at residues 89–108 (AGGS…GDKP) and 436–455 (TEQD…AKKG). 2 coiled-coil regions span residues 636–659 (DDEN…MESL) and 703–727 (IEII…VIIN). Residues 826–846 (VPFAFWVILLILGWNEILMFT) traverse the membrane as a helical segment. Over 847-849 (RLF) the chain is Lumenal. The helical transmembrane segment at 850 to 870 (FRLNIILPMFMAFIIIVGSCL) threads the bilayer. Topologically, residues 871–913 (YTGNAQVLSYLNKIAFIVIKHSYNFYKHLQTVGNQPTKPEKVD) are cytoplasmic.

The protein belongs to the TRAFAC class dynamin-like GTPase superfamily. GB1/RHD3 GTPase family. RHD3 subfamily.

It localises to the endoplasmic reticulum membrane. Its function is as follows. Probable GTP-binding protein involved in generating and maintaining the structure of the tubular endoplasmic reticulum network. The protein is Protein SEY1 homolog of Plasmodium chabaudi chabaudi.